The following is a 307-amino-acid chain: Polysialic acid O-acetyltransferase (307 aa).

A compositionally biased stretch (basic and acidic residues) spans 1–90; that stretch reads MLRLKTQDSR…LKTQDSRLKT (90 aa). Residues 1 to 95 are disordered; it reads MLRLKTQDSR…SRLKTQDSFS (95 aa). 13 consecutive repeat copies span residues 3-9, 10-16, 17-23, 24-30, 31-37, 38-44, 45-51, 52-58, 59-65, 66-72, 73-79, 80-86, and 87-93. The 13 X 7 AA tandem repeat of RLKTQDS encoded by a 7 nucleotide repeat stretch occupies residues 3–93; the sequence is RLKTQDSRLK…QDSRLKTQDS (91 aa). Acetyl-CoA is bound by residues 208–210, Arg-237, Lys-243, Lys-261, and Lys-278; that span reads DGH.

This sequence belongs to the transferase hexapeptide repeat family. As to quaternary structure, homotrimer. Hexamer formed by two homotrimers.

It catalyses the reaction [N-acetyl-alpha-D-neuraminosyl-(2-&gt;8)](n) + n acetyl-CoA = [N,O(9)-diacetyl-alpha-D-neuraminosyl-(2-&gt;8)](n) + n CoA. It carries out the reaction [N-acetyl-alpha-D-neuraminosyl-(2-&gt;8)](n) + n acetyl-CoA = [O(7),N-diacetyl-alpha-D-neuraminosyl-(2-&gt;8)](n) + n CoA. Functionally, catalyzes the O-acetylation of capsular polymeric sialic acid. Shows high substrate specificity toward polymers of sialic acid that contains a large number of residues. In Escherichia coli O1:K1 / APEC, this protein is Polysialic acid O-acetyltransferase.